The following is a 310-amino-acid chain: Probable mitochondrial import receptor subunit TOM40-2 (310 aa).

At Met1 the chain carries N-acetylmethionine.

Belongs to the Tom40 family. Forms part of the preprotein translocase complex of the outer mitochondrial membrane (TOM complex) which consists of at least 6 different proteins (TOM5, TOM6, TOM7, TOM20, TOM22/TOM9 and TOM40). Present in a large lipid-enriched complex called mitochondrial transmembrane lipoprotein (MTL) complex made of proteins located in the two mitochondrial membranes, including the TOM complex and the core components of the MICOS complex and containing at least digalactosyldiacylglycerol (DGDG). Binds to MIC60. Component of a mitochondrial large protein complex that contains, at least, MIC60, DGS1, TOM40, TOM20 proteins, and petC/RISP. In terms of tissue distribution, expressed in roots, flowers, young cotyledons and leaves.

The protein resides in the mitochondrion outer membrane. Functionally, central component of the receptor complex responsible for the recognition and translocation of cytosolically synthesized mitochondrial preproteins. Together with TOM22 functions as the transit peptide receptor at the surface of the mitochondrion outer membrane and facilitates the movement of preproteins into the translocation pore. Directly involved in the pore formation. This is Probable mitochondrial import receptor subunit TOM40-2 from Arabidopsis thaliana (Mouse-ear cress).